The chain runs to 70 residues: Large ribosomal subunit protein bL31 (70 aa).

The Zn(2+) site is built by C16, C18, C37, and C40.

It belongs to the bacterial ribosomal protein bL31 family. Type A subfamily. In terms of assembly, part of the 50S ribosomal subunit. Requires Zn(2+) as cofactor.

Its function is as follows. Binds the 23S rRNA. This is Large ribosomal subunit protein bL31 from Actinobacillus pleuropneumoniae serotype 5b (strain L20).